The primary structure comprises 321 residues: Protein BIG GRAIN 1-like E (321 aa).

A disordered region spans residues 134-217 (AGSKKNKSKS…PPPYLNTPTK (84 aa)). A compositionally biased stretch (basic residues) spans 135-147 (GSKKNKSKSKSKT). Residues 172 to 206 (ISHFFSSSRSTSTTTTTTASSSSKSLISSSSSGFR) show a composition bias toward low complexity.

Belongs to the BIG GRAIN 1 (BG1) plant protein family.

Its subcellular location is the cell membrane. Functionally, involved in auxin transport. Regulator of the auxin signaling pathway. This is Protein BIG GRAIN 1-like E from Arabidopsis thaliana (Mouse-ear cress).